We begin with the raw amino-acid sequence, 659 residues long: Biosynthetic arginine decarboxylase (659 aa).

The residue at position 128 (Lys128) is an N6-(pyridoxal phosphate)lysine. Residue 308–318 (FDVGGGLGVDY) coordinates substrate.

This sequence belongs to the Orn/Lys/Arg decarboxylase class-II family. SpeA subfamily. The cofactor is Mg(2+). It depends on pyridoxal 5'-phosphate as a cofactor.

It catalyses the reaction L-arginine + H(+) = agmatine + CO2. It functions in the pathway amine and polyamine biosynthesis; agmatine biosynthesis; agmatine from L-arginine: step 1/1. In terms of biological role, catalyzes the biosynthesis of agmatine from arginine. This Yersinia pestis protein is Biosynthetic arginine decarboxylase.